The primary structure comprises 201 residues: Large ribosomal subunit protein uL4 (201 aa).

A disordered region spans residues 43–73 (SRGQKTRAEVTGSGKKPWRQKGTGRARSGSV).

It belongs to the universal ribosomal protein uL4 family. In terms of assembly, part of the 50S ribosomal subunit.

Functionally, one of the primary rRNA binding proteins, this protein initially binds near the 5'-end of the 23S rRNA. It is important during the early stages of 50S assembly. It makes multiple contacts with different domains of the 23S rRNA in the assembled 50S subunit and ribosome. Its function is as follows. Forms part of the polypeptide exit tunnel. The chain is Large ribosomal subunit protein uL4 from Sodalis glossinidius (strain morsitans).